A 236-amino-acid chain; its full sequence is Demethylmenaquinone methyltransferase (236 aa).

S-adenosyl-L-methionine contacts are provided by residues Thr58, Asp79, and 106 to 107 (NA).

This sequence belongs to the class I-like SAM-binding methyltransferase superfamily. MenG/UbiE family.

The catalysed reaction is a 2-demethylmenaquinol + S-adenosyl-L-methionine = a menaquinol + S-adenosyl-L-homocysteine + H(+). The protein operates within quinol/quinone metabolism; menaquinone biosynthesis; menaquinol from 1,4-dihydroxy-2-naphthoate: step 2/2. Functionally, methyltransferase required for the conversion of demethylmenaquinol (DMKH2) to menaquinol (MKH2). The polypeptide is Demethylmenaquinone methyltransferase (Alkalihalophilus pseudofirmus (strain ATCC BAA-2126 / JCM 17055 / OF4) (Bacillus pseudofirmus)).